A 347-amino-acid chain; its full sequence is Ribosomal RNA large subunit methyltransferase M (347 aa).

Residues Ser184, 217–220 (APGG), Asp236, Asp256, and Asp272 contribute to the S-adenosyl-L-methionine site. Lys301 serves as the catalytic Proton acceptor.

The protein belongs to the class I-like SAM-binding methyltransferase superfamily. RNA methyltransferase RlmE family. RlmM subfamily. In terms of assembly, monomer.

Its subcellular location is the cytoplasm. It carries out the reaction cytidine(2498) in 23S rRNA + S-adenosyl-L-methionine = 2'-O-methylcytidine(2498) in 23S rRNA + S-adenosyl-L-homocysteine + H(+). Functionally, catalyzes the 2'-O-methylation at nucleotide C2498 in 23S rRNA. The protein is Ribosomal RNA large subunit methyltransferase M of Xanthomonas campestris pv. campestris (strain 8004).